A 490-amino-acid polypeptide reads, in one-letter code: Betaine aldehyde dehydrogenase (490 aa).

2 residues coordinate K(+): Ile27 and Asp93. 150-152 contacts NAD(+); sequence GAW. Lys162 functions as the Charge relay system in the catalytic mechanism. 176-179 is an NAD(+) binding site; it reads KPSE. Val180 contacts K(+). 230-233 is an NAD(+) binding site; the sequence is GTTT. Leu246 contacts K(+). The Proton acceptor role is filled by Glu252. The NAD(+) site is built by Gly254, Cys286, and Glu387. The Nucleophile role is filled by Cys286. Position 286 is a cysteine sulfenic acid (-SOH) (Cys286). K(+)-binding residues include Lys457 and Gly460. Glu464 acts as the Charge relay system in catalysis.

This sequence belongs to the aldehyde dehydrogenase family. Dimer of dimers. It depends on K(+) as a cofactor.

The catalysed reaction is betaine aldehyde + NAD(+) + H2O = glycine betaine + NADH + 2 H(+). It functions in the pathway amine and polyamine biosynthesis; betaine biosynthesis via choline pathway; betaine from betaine aldehyde: step 1/1. Its function is as follows. Involved in the biosynthesis of the osmoprotectant glycine betaine. Catalyzes the irreversible oxidation of betaine aldehyde to the corresponding acid. The sequence is that of Betaine aldehyde dehydrogenase from Pseudomonas entomophila (strain L48).